We begin with the raw amino-acid sequence, 278 residues long: Inosose isomerase (278 aa).

A divalent metal cation contacts are provided by Glu142, Asp174, His200, and Glu246.

The protein belongs to the IolI family. A divalent metal cation is required as a cofactor.

The catalysed reaction is scyllo-inosose = scyllo-inosine. It functions in the pathway polyol metabolism; myo-inositol degradation into acetyl-CoA. Functionally, involved in the reversible interconverion of 2-keto-myo-inositol (2KMI, inosose or 2,4,6/3,5-pentahydroxycyclohexanone) to 1-keto-D-chiro-inositol (1KDCI or 2,3,5/4,6-pentahydroxycyclohexanone). This is Inosose isomerase (iolI) from Bacillus licheniformis (strain ATCC 14580 / DSM 13 / JCM 2505 / CCUG 7422 / NBRC 12200 / NCIMB 9375 / NCTC 10341 / NRRL NRS-1264 / Gibson 46).